The sequence spans 249 residues: Probable transcriptional regulatory protein ACIAD2052 (249 aa).

The protein belongs to the TACO1 family.

The protein resides in the cytoplasm. This Acinetobacter baylyi (strain ATCC 33305 / BD413 / ADP1) protein is Probable transcriptional regulatory protein ACIAD2052.